The chain runs to 294 residues: Nucleotide-binding protein CLD_1131 (294 aa).

8–15 (GLSGAGKT) provides a ligand contact to ATP. 59 to 62 (DIRG) contributes to the GTP binding site.

It belongs to the RapZ-like family.

Functionally, displays ATPase and GTPase activities. This chain is Nucleotide-binding protein CLD_1131, found in Clostridium botulinum (strain Okra / Type B1).